We begin with the raw amino-acid sequence, 153 residues long: Transcriptional repressor NrdR (153 aa).

Positions M1–G22 are disordered. A zinc finger lies at C3–C34. An ATP-cone domain is found at L49–V139.

It belongs to the NrdR family. Zn(2+) serves as cofactor.

Functionally, negatively regulates transcription of bacterial ribonucleotide reductase nrd genes and operons by binding to NrdR-boxes. This Halalkalibacterium halodurans (strain ATCC BAA-125 / DSM 18197 / FERM 7344 / JCM 9153 / C-125) (Bacillus halodurans) protein is Transcriptional repressor NrdR.